The sequence spans 95 residues: Small ubiquitin-related modifier 2-B (95 aa).

Lys11 is covalently cross-linked (Glycyl lysine isopeptide (Lys-Gly) (interchain with G-Cter in SUMO)). In terms of domain architecture, Ubiquitin-like spans 16 to 95 (DHINLKVAGQ…VFQQQTGGSY (80 aa)). A Glycyl lysine isopeptide (Gly-Lys) (interchain with K-? in acceptor proteins) cross-link involves residue Gly93. A propeptide spanning residues 94 to 95 (SY) is cleaved from the precursor.

It belongs to the ubiquitin family. SUMO subfamily. In terms of assembly, interacts with sae2 and ube2i. Covalently attached to a number of proteins, including top2. Polymeric chains can be formed through Lys-11 cross-linking. Post-translationally, cleavage of precursor form by a sentrin-specific protease is necessary for function.

Its subcellular location is the nucleus. In terms of biological role, ubiquitin-like protein that can be covalently attached to proteins as a monomer or as a lysine-linked polymer. Covalent attachment via an isopeptide bond to its substrates requires prior activation by the E1 complex sae1-sae2 and linkage to the E2 enzyme ube2i, and can be promoted by an E3 ligase such as pias1-4. This post-translational modification on lysine residues of proteins plays a crucial role in a number of cellular processes such as nuclear transport, DNA replication and repair, mitosis and signal transduction. Polymeric sumo2 chains are also susceptible to polyubiquitination which functions as a signal for proteasomal degradation of modified proteins. The chain is Small ubiquitin-related modifier 2-B (sumo2-b) from Xenopus laevis (African clawed frog).